The sequence spans 262 residues: Hemin import ATP-binding protein HmuV (262 aa).

The region spanning 3 to 244 (LQARNLTLAR…DHMRRVYGIE (242 aa)) is the ABC transporter domain. 35-42 (GANGAGKS) serves as a coordination point for ATP.

Belongs to the ABC transporter superfamily. Heme (hemin) importer (TC 3.A.1.14.5) family. In terms of assembly, the complex is composed of two ATP-binding proteins (HmuV), two transmembrane proteins (HmuU) and a solute-binding protein (HmuT).

It localises to the cell inner membrane. Functionally, part of the ABC transporter complex HmuTUV involved in hemin import. Responsible for energy coupling to the transport system. The sequence is that of Hemin import ATP-binding protein HmuV from Bordetella pertussis (strain Tohama I / ATCC BAA-589 / NCTC 13251).